A 213-amino-acid polypeptide reads, in one-letter code: Thymidylate kinase (213 aa).

ATP is bound at residue 10-17 (GLEGAGKT).

The protein belongs to the thymidylate kinase family.

It carries out the reaction dTMP + ATP = dTDP + ADP. Its function is as follows. Phosphorylation of dTMP to form dTDP in both de novo and salvage pathways of dTTP synthesis. The chain is Thymidylate kinase from Shigella boydii serotype 18 (strain CDC 3083-94 / BS512).